A 91-amino-acid polypeptide reads, in one-letter code: Small ribosomal subunit protein uS15 (91 aa).

This sequence belongs to the universal ribosomal protein uS15 family. As to quaternary structure, part of the 30S ribosomal subunit. Forms a bridge to the 50S subunit in the 70S ribosome, contacting the 23S rRNA.

Its function is as follows. One of the primary rRNA binding proteins, it binds directly to 16S rRNA where it helps nucleate assembly of the platform of the 30S subunit by binding and bridging several RNA helices of the 16S rRNA. Functionally, forms an intersubunit bridge (bridge B4) with the 23S rRNA of the 50S subunit in the ribosome. In Cytophaga hutchinsonii (strain ATCC 33406 / DSM 1761 / CIP 103989 / NBRC 15051 / NCIMB 9469 / D465), this protein is Small ribosomal subunit protein uS15.